A 134-amino-acid chain; its full sequence is Fluoride-specific ion channel FluC 3 (134 aa).

A run of 4 helical transmembrane segments spans residues leucine 4–leucine 24, methionine 35–phenylalanine 55, methionine 67–valine 87, and isoleucine 100–isoleucine 120. Glycine 74 and serine 77 together coordinate Na(+).

It belongs to the fluoride channel Fluc/FEX (TC 1.A.43) family.

It is found in the cell inner membrane. It carries out the reaction fluoride(in) = fluoride(out). With respect to regulation, na(+) is not transported, but it plays an essential structural role and its presence is essential for fluoride channel function. Its function is as follows. Fluoride-specific ion channel. Important for reducing fluoride concentration in the cell, thus reducing its toxicity. This chain is Fluoride-specific ion channel FluC 3, found in Yersinia pseudotuberculosis serotype I (strain IP32953).